The chain runs to 261 residues: Undecaprenyl-diphosphatase 2 (261 aa).

Transmembrane regions (helical) follow at residues 1-21, 38-58, 75-95, 103-123, 138-158, 178-198, 212-232, and 240-260; these read MLEA…PISS, PGKT…CVVF, FAFA…GATL, LESP…ILVI, MSPA…VPGV, AAEF…AYSL, LIAL…KGFI, and FAPF…LILM.

Belongs to the UppP family.

The protein localises to the cell inner membrane. The enzyme catalyses di-trans,octa-cis-undecaprenyl diphosphate + H2O = di-trans,octa-cis-undecaprenyl phosphate + phosphate + H(+). Its function is as follows. Catalyzes the dephosphorylation of undecaprenyl diphosphate (UPP). Confers resistance to bacitracin. This chain is Undecaprenyl-diphosphatase 2, found in Paramagnetospirillum magneticum (strain ATCC 700264 / AMB-1) (Magnetospirillum magneticum).